The following is a 290-amino-acid chain: MKPPEHSLIIISGLSGSGKSVALKTFEDLDYYCSDNLPVELLPHFLRRRLRVAELSDQRIAIGIDIRSGSNISELDQWRHTAKHYNIKAHLLFFDASNETLLKRYADTRRRHPLSHLGLSLPEAIALERELTAPLREAAEAVIDTSTFNVHQLRRHVVTEFALTHSDKLSLLFESFAYKRGVPTEADFVFDARILPNPHWEPELRSLTGRDSNVRDYMEQQPDVILYLTQITEFLDTWLARLQADTRSYVTVAFGCTGGKHRSVYLAEQMARHAREKGWSEVATFHRELE.

ATP is bound at residue 13 to 20 (GLSGSGKS). A GTP-binding site is contributed by 65–68 (DIRS).

It belongs to the RapZ-like family.

In terms of biological role, displays ATPase and GTPase activities. The sequence is that of Nucleotide-binding protein XfasM23_0667 from Xylella fastidiosa (strain M23).